A 337-amino-acid chain; its full sequence is Anthranilate phosphoribosyltransferase (337 aa).

5-phospho-alpha-D-ribose 1-diphosphate contacts are provided by residues glycine 80, 83 to 84 (GD), threonine 88, 90 to 93 (NIST), 108 to 116 (KHGNRAVSS), and serine 120. Glycine 80 is a binding site for anthranilate. Serine 92 serves as a coordination point for Mg(2+). Position 111 (asparagine 111) interacts with anthranilate. Position 166 (arginine 166) interacts with anthranilate. 2 residues coordinate Mg(2+): aspartate 224 and glutamate 225.

This sequence belongs to the anthranilate phosphoribosyltransferase family. As to quaternary structure, homodimer. It depends on Mg(2+) as a cofactor.

The catalysed reaction is N-(5-phospho-beta-D-ribosyl)anthranilate + diphosphate = 5-phospho-alpha-D-ribose 1-diphosphate + anthranilate. The protein operates within amino-acid biosynthesis; L-tryptophan biosynthesis; L-tryptophan from chorismate: step 2/5. Catalyzes the transfer of the phosphoribosyl group of 5-phosphorylribose-1-pyrophosphate (PRPP) to anthranilate to yield N-(5'-phosphoribosyl)-anthranilate (PRA). This is Anthranilate phosphoribosyltransferase from Anaeromyxobacter dehalogenans (strain 2CP-1 / ATCC BAA-258).